The chain runs to 322 residues: Methionyl-tRNA formyltransferase (322 aa).

(6S)-5,6,7,8-tetrahydrofolate is bound at residue 112–115 (SLLP).

It belongs to the Fmt family.

It catalyses the reaction L-methionyl-tRNA(fMet) + (6R)-10-formyltetrahydrofolate = N-formyl-L-methionyl-tRNA(fMet) + (6S)-5,6,7,8-tetrahydrofolate + H(+). Attaches a formyl group to the free amino group of methionyl-tRNA(fMet). The formyl group appears to play a dual role in the initiator identity of N-formylmethionyl-tRNA by promoting its recognition by IF2 and preventing the misappropriation of this tRNA by the elongation apparatus. The protein is Methionyl-tRNA formyltransferase of Synechococcus sp. (strain JA-2-3B'a(2-13)) (Cyanobacteria bacterium Yellowstone B-Prime).